Consider the following 744-residue polypeptide: Tripartite motif-containing protein 2 (744 aa).

Ser-10 carries the post-translational modification Phosphoserine. Residues 23 to 64 form an RING-type zinc finger; the sequence is CSICLERYKNPKVLPCLHTFCERCLQNYIPAHSLTLSCPVCR. A B box-type zinc finger spans residues 113–154; it reads GKPLSCPNHDGNVMEFYCQSCETAMCRECTEGEHAEHPTVPL. Residues Cys-118, His-121, Cys-141, and His-146 each contribute to the Zn(2+) site. One copy of the Filamin repeat lies at 320–421; that stretch reads TTNAVASETV…IRGSPFKLKV (102 aa). Thr-371 bears the Phosphothreonine mark. Phosphoserine is present on residues Ser-375, Ser-424, and Ser-428. Residues 432–462 form a disordered region; it reads EGVKRRVKSPGSGHVKQKAVKRPASMYSTGK. NHL repeat units follow at residues 473–516, 520–563, 564–605, 609–652, 656–699, and 700–743; these read IFRV…FSND, KSRF…FSSD, GKFK…FQPN, VTRF…FNQE, MLKF…FDGS, and GSFL…YRYL.

It belongs to the TRIM/RBCC family. As to quaternary structure, forms homooligomers. Interacts with TRIM3; this interaction reduces TRIM2 activity. Interacts with myosin V; myosin V may not be a substrate for ubiquitination. Interacts with NEFL. Interacts with phosphorylated BCL2L11. Interacts with SIRPA. RING-type zinc finger-dependent and UBE2D1-dependent autoubiquitination.

It localises to the cytoplasm. It carries out the reaction S-ubiquitinyl-[E2 ubiquitin-conjugating enzyme]-L-cysteine + [acceptor protein]-L-lysine = [E2 ubiquitin-conjugating enzyme]-L-cysteine + N(6)-ubiquitinyl-[acceptor protein]-L-lysine.. It functions in the pathway protein modification; protein ubiquitination. In terms of biological role, UBE2D1-dependent E3 ubiquitin-protein ligase that mediates the ubiquitination of NEFL and of phosphorylated BCL2L11. Plays a neuroprotective function. May play a role in neuronal rapid ischemic tolerance. Plays a role in antiviral immunity and limits New World arenavirus infection independently of its ubiquitin ligase activity. This is Tripartite motif-containing protein 2 (TRIM2) from Callithrix jacchus (White-tufted-ear marmoset).